The chain runs to 300 residues: LysM and putative peptidoglycan-binding domain-containing protein 3 (300 aa).

Residues 1 to 216 (MAGRNQNRTA…PYYGADWGMG (216 aa)) lie on the Extracellular side of the membrane. Residues asparagine 7 and asparagine 26 are each glycosylated (N-linked (GlcNAc...) asparagine). Serine 55 bears the Phosphoserine mark. A LysM domain is found at 65 to 109 (LTKDIQEGDTLNAVALQYCCTVADIKRVNNLISDQDFFALRSIKI). The segment at 136–157 (PYFQEQDTVPANDSPSSSESAG) is disordered. The span at 140 to 156 (EQDTVPANDSPSSSESA) shows a compositional bias: polar residues. Asparagine 199 carries an N-linked (GlcNAc...) asparagine glycan. A helical membrane pass occupies residues 217–237 (WWTAVVIMLIVGIITPVFYLL). The Cytoplasmic segment spans residues 238-300 (YYEILAKVDV…LYRQDPQARD (63 aa)). Residues 253-300 (VDSSHLHPGLTPPSHHREMGNAIGPTKGIPVGQQDDHRLYRQDPQARD) are disordered. Residues 286–300 (QDDHRLYRQDPQARD) are compositionally biased toward basic and acidic residues.

The protein resides in the cell membrane. It is found in the golgi apparatus. In terms of biological role, essential for Golgi structural integrity. This chain is LysM and putative peptidoglycan-binding domain-containing protein 3 (Lysmd3), found in Rattus norvegicus (Rat).